Reading from the N-terminus, the 451-residue chain is Protein naked cuticle homolog 2 (451 aa).

The segment at M1–N108 is disordered. G2 is lipidated: N-myristoyl glycine. The tract at residues G2–L173 is targeting to the basolateral cell membrane. Basic and acidic residues-rich tracts occupy residues K34–Q63 and D89–P99. Residues Q113–E178 form an interaction with DVL1, DVL2 and DVL3 region. Positions E119–V154 constitute an EF-hand domain. Ca(2+)-binding residues include D132, D134, K138, and D143. Disordered stretches follow at residues S162 to V237 and Y256 to H408. Positions S180 to L215 are enriched in basic and acidic residues. The interval Q300–Y385 is interaction with TGFA. The segment covering K332–K351 has biased composition (low complexity).

This sequence belongs to the NKD family. As to quaternary structure, interacts with DVL1, DVL2, DVL3 and PPP2R3A. Interacts with RNF25 and TGFA (via cytoplasmic domain). Post-translationally, ubiquitinated, leading to rapid proteasomal degradation. Interaction with TGFA interferes with RNF25 binding and protects against ubiquitination mediated by RNF25. Expressed in kidney, lung, pancreas and spleen.

It localises to the cell membrane. The protein resides in the cytoplasm. The protein localises to the cytoplasmic vesicle. In terms of biological role, cell autonomous antagonist of the canonical Wnt signaling pathway. May activate a second Wnt signaling pathway that controls planar cell polarity. Required for processing of TGFA and for targeting of TGFA to the basolateral membrane of polarized epithelial cells. This is Protein naked cuticle homolog 2 (NKD2) from Homo sapiens (Human).